We begin with the raw amino-acid sequence, 435 residues long: GTPase Obg (435 aa).

The Obg domain occupies M1–I159. Residues A160–F329 form the OBG-type G domain. GTP is bound by residues G166–S173, F191–N195, D212–G215, N282–D285, and S310–L312. Residues S173 and T193 each coordinate Mg(2+). An OCT domain is found at T355 to E435.

It belongs to the TRAFAC class OBG-HflX-like GTPase superfamily. OBG GTPase family. As to quaternary structure, monomer. It depends on Mg(2+) as a cofactor.

It localises to the cytoplasm. An essential GTPase which binds GTP, GDP and possibly (p)ppGpp with moderate affinity, with high nucleotide exchange rates and a fairly low GTP hydrolysis rate. Plays a role in control of the cell cycle, stress response, ribosome biogenesis and in those bacteria that undergo differentiation, in morphogenesis control. This Ureaplasma urealyticum serovar 10 (strain ATCC 33699 / Western) protein is GTPase Obg.